The primary structure comprises 287 residues: uncharacterized protein (287 aa).

The region spanning 115 to 287 is the ATP-grasp domain; sequence PQNFDREWNP…NLAIELLKAI (173 aa). Residues lysine 145 and 178–188 contribute to the ATP site; that span reads QKYITCSKGES. Positions 248, 261, and 263 each coordinate Mg(2+). Residues aspartate 248, glutamate 261, and asparagine 263 each coordinate Mn(2+).

The protein belongs to the RimK family.

This is an uncharacterized protein from Mycoplasma genitalium (strain ATCC 33530 / DSM 19775 / NCTC 10195 / G37) (Mycoplasmoides genitalium).